The primary structure comprises 3365 residues: Probable serine/threonine-protein kinase roco9 (3365 aa).

Disordered regions lie at residues 1-177 (MTSI…KSSK), 397-497 (ESTE…QPPQ), 944-985 (PIKK…GFLS), 1044-1098 (IHQQ…NNKI), and 1261-1301 (QNNL…ISKG). Residues 8-27 (FDKKSKRSNEDTGEKEETKK) are compositionally biased toward basic and acidic residues. 4 stretches are compositionally biased toward low complexity: residues 51 to 84 (LQQL…SLNT), 100 to 116 (STNS…STRS), 137 to 169 (SQTS…TVKT), and 397 to 415 (ESTE…TLEP). A Rho-GAP domain is found at 243–437 (TPLYSLIKRQ…RLPQQSSDDN (195 aa)). The span at 421 to 434 (PLSTSTQRLPQQSS) shows a compositional bias: polar residues. 5 stretches are compositionally biased toward low complexity: residues 435–445 (DDNSNNDNNNK), 457–489 (NNDN…QPKQ), 959–974 (SSPL…IPSK), 1044–1096 (IHQQ…NNNN), and 1262–1301 (NNLN…ISKG). Positions 804 to 1484 (IWDIYSPLIE…DQIILWSSFF (681 aa)) constitute a Myotubularin phosphatase domain. 16 LRR repeats span residues 1510–1526 (SQKL…LSYF), 1527–1549 (STLT…IILL), 1550–1572 (SNLT…LLKL), 1576–1599 (KLKL…IYTL), 1600–1622 (STLT…ISKM), 1624–1645 (QLKC…LSLC), 1646–1668 (VGLE…FFKL), 1670–1691 (SLRM…KLDD), 1697–1720 (MNEI…MFEM), 1722–1743 (SLIH…LLDN), 1744–1770 (LVNL…LFKL), 1772–1789 (VLDL…HAML), 1790–1812 (PSLK…DFNL), 1814–1835 (LLSE…IGTK), 1837–1861 (LSLT…ALLK), and 1863–1887 (LKSL…DAIL). Positions 1932–1947 (SKEREKEKEKEKEKEK) are enriched in basic and acidic residues. Disordered regions lie at residues 1932-1963 (SKER…DKDK), 2190-2389 (NNNN…NNGS), 2507-2567 (APST…LQTP), and 2674-2704 (SNQQ…TSIN). 4 stretches are compositionally biased toward low complexity: residues 2190-2205 (NNNN…NNNN), 2216-2389 (SINN…NNGS), 2522-2567 (NNTS…LQTP), and 2676-2688 (QQQQ…STQH). Residues 3008–3269 (ELDPNPIGEG…KKLEEIELIL (262 aa)) form the Protein kinase domain. ATP contacts are provided by residues 3014 to 3022 (IGEGGTATV) and K3035. The active-site Proton acceptor is D3132. Over residues 3311–3333 (QQQKQQQLQQQKQSPKQLQQQKP) the composition is skewed to low complexity. The segment at 3311-3365 (QQQKQQQLQQQKQSPKQLQQQKPLPTPPKQLSNNDSTPTKPLDDSSDSSSEDSNN) is disordered. The segment covering 3354–3365 (DSSDSSSEDSNN) has biased composition (acidic residues).

Belongs to the protein kinase superfamily. TKL Ser/Thr protein kinase family. ROCO subfamily.

It catalyses the reaction L-seryl-[protein] + ATP = O-phospho-L-seryl-[protein] + ADP + H(+). The catalysed reaction is L-threonyl-[protein] + ATP = O-phospho-L-threonyl-[protein] + ADP + H(+). The sequence is that of Probable serine/threonine-protein kinase roco9 (roco9) from Dictyostelium discoideum (Social amoeba).